A 290-amino-acid chain; its full sequence is Porphobilinogen deaminase (290 aa).

Position 237 is an S-(dipyrrolylmethanemethyl)cysteine (Cys-237).

It belongs to the HMBS family. Monomer. The cofactor is dipyrromethane.

It catalyses the reaction 4 porphobilinogen + H2O = hydroxymethylbilane + 4 NH4(+). The protein operates within porphyrin-containing compound metabolism; protoporphyrin-IX biosynthesis; coproporphyrinogen-III from 5-aminolevulinate: step 2/4. In terms of biological role, tetrapolymerization of the monopyrrole PBG into the hydroxymethylbilane pre-uroporphyrinogen in several discrete steps. The polypeptide is Porphobilinogen deaminase (Clostridium botulinum (strain Loch Maree / Type A3)).